The chain runs to 389 residues: Putative nickel insertion protein (389 aa).

Belongs to the LarC family.

The sequence is that of Putative nickel insertion protein from Desulfotalea psychrophila (strain LSv54 / DSM 12343).